The following is a 283-amino-acid chain: Bifunctional protein FolD (283 aa).

Residues 165–167 (GRS), S190, and V231 each bind NADP(+).

This sequence belongs to the tetrahydrofolate dehydrogenase/cyclohydrolase family. In terms of assembly, homodimer.

It carries out the reaction (6R)-5,10-methylene-5,6,7,8-tetrahydrofolate + NADP(+) = (6R)-5,10-methenyltetrahydrofolate + NADPH. It catalyses the reaction (6R)-5,10-methenyltetrahydrofolate + H2O = (6R)-10-formyltetrahydrofolate + H(+). It participates in one-carbon metabolism; tetrahydrofolate interconversion. Its function is as follows. Catalyzes the oxidation of 5,10-methylenetetrahydrofolate to 5,10-methenyltetrahydrofolate and then the hydrolysis of 5,10-methenyltetrahydrofolate to 10-formyltetrahydrofolate. In Bacillus velezensis (strain DSM 23117 / BGSC 10A6 / LMG 26770 / FZB42) (Bacillus amyloliquefaciens subsp. plantarum), this protein is Bifunctional protein FolD.